Consider the following 320-residue polypeptide: tRNA (guanosine(34)-2'-O)-methyltransferase (320 aa).

Positions 53, 55, 81, 97, and 122 each coordinate S-adenosyl-L-methionine. Lysine 162 functions as the Proton acceptor in the catalytic mechanism.

This sequence belongs to the class I-like SAM-binding methyltransferase superfamily. RNA methyltransferase RlmE family. TRM7 subfamily. As to quaternary structure, interacts with CG33172/WDR6.

The protein resides in the cytoplasm. The enzyme catalyses cytidine(32)/guanosine(34) in tRNA + 2 S-adenosyl-L-methionine = 2'-O-methylcytidine(32)/2'-O-methylguanosine(34) in tRNA + 2 S-adenosyl-L-homocysteine + 2 H(+). Its function is as follows. Methylates the 2'-O-ribose of nucleotides at position 34 of the tRNA anticodon loop of substrate tRNAs. May require WDR6 for methylation of the nucleotide at position 34 of the anticodon loop of substrate tRNAs. Plays a role in neurogenesis. Requisite for RNA-mediated gene silencing. Modifies position 34 in tRNA(Leu(CAA)), tRNA(Leu(CAG)), tRNA(Phe(GAA)), and tRNA(Trp(CCA)). This chain is tRNA (guanosine(34)-2'-O)-methyltransferase, found in Drosophila melanogaster (Fruit fly).